The primary structure comprises 417 residues: Gamma-glutamyl phosphate reductase (417 aa).

It belongs to the gamma-glutamyl phosphate reductase family.

It localises to the cytoplasm. The catalysed reaction is L-glutamate 5-semialdehyde + phosphate + NADP(+) = L-glutamyl 5-phosphate + NADPH + H(+). It participates in amino-acid biosynthesis; L-proline biosynthesis; L-glutamate 5-semialdehyde from L-glutamate: step 2/2. Functionally, catalyzes the NADPH-dependent reduction of L-glutamate 5-phosphate into L-glutamate 5-semialdehyde and phosphate. The product spontaneously undergoes cyclization to form 1-pyrroline-5-carboxylate. This Shigella boydii serotype 18 (strain CDC 3083-94 / BS512) protein is Gamma-glutamyl phosphate reductase.